We begin with the raw amino-acid sequence, 1237 residues long: Zinc finger protein ZFAT (1237 aa).

Residues 12–35 (FMCKCCNLFSPNQSELVTHVSEKH) form a C2H2-type 1 zinc finger. Residues 50-110 (RPLNTPENPN…GPLATEEGSR (61 aa)) form a disordered region. A compositionally biased stretch (basic residues) spans 70–81 (MKRKRGRPKGST). The C2H2-type 2; degenerate zinc finger occupies 116–141 (LECSKCCRKFSNTRQLRKHICIIVLN). Residues 147 to 188 (GDAGNESDLDLEKTYKEDDREKASKRPRAQKTEKVQKISGKE) are disordered. Residues 156–186 (DLEKTYKEDDREKASKRPRAQKTEKVQKISG) show a composition bias toward basic and acidic residues. C2H2-type zinc fingers lie at residues 271–293 (FTCE…LRIH), 299–321 (YKCS…LRKH), 326–349 (FACD…ERVH), 354–377 (QHCR…RDMH), 404–426 (YDCH…MLVH), 432–454 (FACE…VRKH), and 458–481 (YVCA…REVH). Residues cysteine 273, cysteine 276, histidine 289, histidine 293, cysteine 301, cysteine 304, histidine 317, histidine 321, cysteine 328, cysteine 331, histidine 344, histidine 349, cysteine 356, cysteine 359, histidine 372, histidine 377, cysteine 406, cysteine 409, histidine 422, and histidine 426 each contribute to the Zn(2+) site. Cysteine 460, cysteine 463, histidine 476, and histidine 481 together coordinate Zn(2+). Disordered regions lie at residues 551–576 (VPGD…LSPC) and 601–671 (SDTS…CLRA). Polar residues predominate over residues 565–574 (TPQSESSSLS). The segment covering 601-617 (SDTSSAEPPAAAEATSD) has biased composition (low complexity). C2H2-type zinc fingers lie at residues 737–759 (LECE…VRTH), 765–788 (YYCS…IQKH), 793–817 (LKCP…LKVH), and 825–848 (YSCP…KTNH). Cysteine 767, cysteine 770, histidine 783, histidine 788, cysteine 795, cysteine 800, histidine 813, histidine 817, cysteine 827, cysteine 830, histidine 843, histidine 848, cysteine 877, cysteine 880, histidine 894, histidine 898, cysteine 906, cysteine 909, histidine 922, histidine 926, cysteine 934, cysteine 937, histidine 950, and leucine 953 together coordinate Zn(2+). A C2H2-type 14; degenerate zinc finger spans residues 875 to 898 (MKCPYCDFYFMKNGSDLQRHIWAH). 5 consecutive C2H2-type zinc fingers follow at residues 904–926 (FKCS…MNRH), 932–954 (HLCD…KLLH), 961–983 (FKCT…MEQH), 989–1012 (FRCA…NRKH), and 1036–1059 (LKCP…KNKH).

As to expression, detected in spleen and thymus but not in liver, muscle, heart, kidney, brain, bone marrow or pancreas. Expressed in CD19+, CD4+ and CD8+ lymphocytes but not in CD11b+ lymphocytes or peritoneal macrophages (at protein level).

Its subcellular location is the nucleus. The protein resides in the cytoplasm. It localises to the cytosol. Its function is as follows. May be involved in transcriptional regulation. Overexpression causes down-regulation of a number of genes involved in the immune response. Some genes are also up-regulated. The chain is Zinc finger protein ZFAT (Zfat) from Mus musculus (Mouse).